The following is a 347-amino-acid chain: UDP-3-O-acylglucosamine N-acyltransferase (347 aa).

The active-site Proton acceptor is H248.

This sequence belongs to the transferase hexapeptide repeat family. LpxD subfamily. As to quaternary structure, homotrimer.

It carries out the reaction a UDP-3-O-[(3R)-3-hydroxyacyl]-alpha-D-glucosamine + a (3R)-hydroxyacyl-[ACP] = a UDP-2-N,3-O-bis[(3R)-3-hydroxyacyl]-alpha-D-glucosamine + holo-[ACP] + H(+). It functions in the pathway bacterial outer membrane biogenesis; LPS lipid A biosynthesis. Functionally, catalyzes the N-acylation of UDP-3-O-acylglucosamine using 3-hydroxyacyl-ACP as the acyl donor. Is involved in the biosynthesis of lipid A, a phosphorylated glycolipid that anchors the lipopolysaccharide to the outer membrane of the cell. This chain is UDP-3-O-acylglucosamine N-acyltransferase, found in Synechococcus sp. (strain CC9902).